The primary structure comprises 198 residues: 7-methyl-GTP pyrophosphatase (198 aa).

Catalysis depends on Asp-75, which acts as the Proton acceptor.

The protein belongs to the Maf family. YceF subfamily. A divalent metal cation is required as a cofactor.

It localises to the cytoplasm. It carries out the reaction N(7)-methyl-GTP + H2O = N(7)-methyl-GMP + diphosphate + H(+). Nucleoside triphosphate pyrophosphatase that hydrolyzes 7-methyl-GTP (m(7)GTP). May have a dual role in cell division arrest and in preventing the incorporation of modified nucleotides into cellular nucleic acids. This Bartonella quintana (strain Toulouse) (Rochalimaea quintana) protein is 7-methyl-GTP pyrophosphatase.